The primary structure comprises 314 residues: Olfactory receptor 1E16 (314 aa).

Topologically, residues 1–29 (MTERNKTVISQFLLLGLPIPPEHQQLFYA) are extracellular. Residue Asn5 is glycosylated (N-linked (GlcNAc...) asparagine). A helical transmembrane segment spans residues 30–50 (LFLVMYLTTVLGNLIIIILII). The Cytoplasmic portion of the chain corresponds to 51–57 (LDSHLHT). Residues 58–78 (PMYLFLSNLSFSDLCFSSVTM) form a helical membrane-spanning segment. Topologically, residues 79-97 (PKLLQNMQSQVPSIPYAGC) are extracellular. Cys97 and Cys179 are oxidised to a cystine. Residues 98–118 (LAQIYFFLFFGDLGNFLLVAM) form a helical membrane-spanning segment. Topologically, residues 119-143 (AYDRYVAICYPLHYTTIMSPRLCVS) are cytoplasmic. Residues 144-164 (LVVLSWVLTTFHAMLHTLLMA) form a helical membrane-spanning segment. The Extracellular segment spans residues 165–196 (RLSFCEDNVIPHYFCDMSALLKLACSDTRVNE). The chain crosses the membrane as a helical span at residues 197-217 (VVIFIVASIFLVLPFALITMS). The Cytoplasmic portion of the chain corresponds to 218 to 239 (YVRIVSSILKVPSSQGIYKAFS). The chain crosses the membrane as a helical span at residues 240-260 (TCGSHLSVVSLFYGTVIGLYL). At 261-271 (SPSSNNSTVKD) the chain is on the extracellular side. Asn265 and Asn266 each carry an N-linked (GlcNAc...) asparagine glycan. The chain crosses the membrane as a helical span at residues 272–292 (TVMSLMYTVVTPMLNPFIYSL). Over 293-314 (RNRDIKGALERVFCKRKIQLNL) the chain is Cytoplasmic.

This sequence belongs to the G-protein coupled receptor 1 family. In terms of tissue distribution, olfactory epithelium.

It is found in the cell membrane. Odorant receptor. Activated by a lily-derived aldehyde as well as other odorants. May signal through an inositol 1,4,5-trisphosphate (IP3) second messenger system. The chain is Olfactory receptor 1E16 from Mus musculus (Mouse).